A 205-amino-acid polypeptide reads, in one-letter code: Meiotic nuclear division protein 1 homolog (205 aa).

At serine 2 the chain carries N-acetylserine. Positions histidine 84 to isoleucine 173 form a coiled coil.

It belongs to the MND1 family. As to quaternary structure, heterodimer with PSMC3IP/HOP2. MND1-PSMC3IP interacts with DMC1 and RAD51 and binds preferentially to dsDNA.

The protein localises to the nucleus. Required for proper homologous chromosome pairing and efficient cross-over and intragenic recombination during meiosis. Stimulates both DMC1- and RAD51-mediated homologous strand assimilation, which is required for the resolution of meiotic double-strand breaks. This Homo sapiens (Human) protein is Meiotic nuclear division protein 1 homolog.